A 325-amino-acid chain; its full sequence is MNKFKNIAVYGGGSFGTSLASLAAQNCNNVTLFLRDEAIAKEILHNKTNVKYLGDIKLPAHLQATTNLDIIKDFELIIIALPSYAFDDSIKLLKTHSISKDNTLLIATKGFARNPTALFSDRLKTLLPYNPTAFFVGPNLAKELAKNLPASASIASLDIDIANKIAYNLSSKIFTTNVSSDIVTLQVAGALKNIFAIKSGIDLARKQGENARATLIVAALKEIAILSKALGGMQKNSDILLEGVVGDLVLTCYSLGSRNTKFGYELGISSDKQKFLQEYKELVEGREALKLVLDLIKKYNLHMPIISEVASCVIPYVMPAFAGMT.

NADPH contacts are provided by serine 14, phenylalanine 15, arginine 35, and lysine 109. 2 residues coordinate sn-glycerol 3-phosphate: lysine 109 and glycine 137. Residue alanine 141 participates in NADPH binding. Sn-glycerol 3-phosphate contacts are provided by lysine 192, aspartate 247, serine 257, arginine 258, and asparagine 259. Residue lysine 192 is the Proton acceptor of the active site. An NADPH-binding site is contributed by arginine 258. Positions 282 and 284 each coordinate NADPH.

It belongs to the NAD-dependent glycerol-3-phosphate dehydrogenase family.

The protein localises to the cytoplasm. It carries out the reaction sn-glycerol 3-phosphate + NAD(+) = dihydroxyacetone phosphate + NADH + H(+). The catalysed reaction is sn-glycerol 3-phosphate + NADP(+) = dihydroxyacetone phosphate + NADPH + H(+). The protein operates within membrane lipid metabolism; glycerophospholipid metabolism. Catalyzes the reduction of the glycolytic intermediate dihydroxyacetone phosphate (DHAP) to sn-glycerol 3-phosphate (G3P), the key precursor for phospholipid synthesis. The polypeptide is Glycerol-3-phosphate dehydrogenase [NAD(P)+] (Rickettsia africae (strain ESF-5)).